The chain runs to 503 residues: ATP synthase subunit alpha (503 aa).

ATP is bound at residue 170 to 177 (GDRQTGKT).

Belongs to the ATPase alpha/beta chains family. In terms of assembly, F-type ATPases have 2 components, CF(1) - the catalytic core - and CF(0) - the membrane proton channel. CF(1) has five subunits: alpha(3), beta(3), gamma(1), delta(1), epsilon(1). CF(0) has three main subunits: a(1), b(2) and c(9-12). The alpha and beta chains form an alternating ring which encloses part of the gamma chain. CF(1) is attached to CF(0) by a central stalk formed by the gamma and epsilon chains, while a peripheral stalk is formed by the delta and b chains.

The protein resides in the cell inner membrane. The catalysed reaction is ATP + H2O + 4 H(+)(in) = ADP + phosphate + 5 H(+)(out). Produces ATP from ADP in the presence of a proton gradient across the membrane. The alpha chain is a regulatory subunit. The sequence is that of ATP synthase subunit alpha from Pseudothermotoga lettingae (strain ATCC BAA-301 / DSM 14385 / NBRC 107922 / TMO) (Thermotoga lettingae).